We begin with the raw amino-acid sequence, 148 residues long: Arginine repressor (148 aa).

Belongs to the ArgR family.

The protein resides in the cytoplasm. It functions in the pathway amino-acid biosynthesis; L-arginine biosynthesis [regulation]. In terms of biological role, regulates arginine biosynthesis genes. This is Arginine repressor (argR) from Streptococcus pneumoniae serotype 4 (strain ATCC BAA-334 / TIGR4).